Reading from the N-terminus, the 333-residue chain is Acetyl-coenzyme A carboxylase carboxyl transferase subunit alpha (333 aa).

Residues 48–308 (LLEQKVDALR…KEMLVEELRD (261 aa)) enclose the CoA carboxyltransferase C-terminal domain.

This sequence belongs to the AccA family. In terms of assembly, acetyl-CoA carboxylase is a heterohexamer composed of biotin carboxyl carrier protein (AccB), biotin carboxylase (AccC) and two subunits each of ACCase subunit alpha (AccA) and ACCase subunit beta (AccD).

It localises to the cytoplasm. It carries out the reaction N(6)-carboxybiotinyl-L-lysyl-[protein] + acetyl-CoA = N(6)-biotinyl-L-lysyl-[protein] + malonyl-CoA. It participates in lipid metabolism; malonyl-CoA biosynthesis; malonyl-CoA from acetyl-CoA: step 1/1. Component of the acetyl coenzyme A carboxylase (ACC) complex. First, biotin carboxylase catalyzes the carboxylation of biotin on its carrier protein (BCCP) and then the CO(2) group is transferred by the carboxyltransferase to acetyl-CoA to form malonyl-CoA. This is Acetyl-coenzyme A carboxylase carboxyl transferase subunit alpha from Chlorobium limicola (strain DSM 245 / NBRC 103803 / 6330).